The chain runs to 128 residues: Sirohydrochlorin cobaltochelatase (128 aa).

Catalysis depends on His9, which acts as the Proton acceptor. Position 9 (His9) interacts with Co(2+). Substrate-binding positions include Lys43 and 68–73 (FATGTH). His73 contributes to the Co(2+) binding site.

Belongs to the CbiX family. CbiXS subfamily. In terms of assembly, homotetramer; dimer of dimers.

It carries out the reaction Co-sirohydrochlorin + 2 H(+) = sirohydrochlorin + Co(2+). Its pathway is cofactor biosynthesis; adenosylcobalamin biosynthesis; cob(II)yrinate a,c-diamide from sirohydrochlorin (anaerobic route): step 1/10. In terms of biological role, catalyzes the insertion of Co(2+) into sirohydrochlorin as part of the anaerobic pathway to cobalamin biosynthesis. This Saccharolobus islandicus (strain Y.N.15.51 / Yellowstone #2) (Sulfolobus islandicus) protein is Sirohydrochlorin cobaltochelatase.